The primary structure comprises 433 residues: Tol-Pal system protein TolB (433 aa).

A signal peptide spans 1–21; the sequence is MIKRLRGLLVLLCCVAGMAMA.

Belongs to the TolB family. As to quaternary structure, the Tol-Pal system is composed of five core proteins: the inner membrane proteins TolA, TolQ and TolR, the periplasmic protein TolB and the outer membrane protein Pal. They form a network linking the inner and outer membranes and the peptidoglycan layer.

The protein localises to the periplasm. In terms of biological role, part of the Tol-Pal system, which plays a role in outer membrane invagination during cell division and is important for maintaining outer membrane integrity. This chain is Tol-Pal system protein TolB, found in Pseudomonas entomophila (strain L48).